We begin with the raw amino-acid sequence, 376 residues long: MYSAISEKISETITLQRQTSSRYIEFFVFRNVDINELWTTDISEDKTHDVWPAVNEKSFKKFLENELTSYQRPIPLLGIPQNGTVSKTCKKEKQRETDCVNYERKRGNPVTFYPRHRAKRNANTDTCISEEPSILVSHHRNSKMDVFMDTNKITLVNRELIWVPHDQVRIVKLDISLYIPDGFFGVITGHSNDVFCECVTEIITDETDISVFLMNLSEHSLMLLPGDVEFSINFLPCYIPEPWEMINLSPPEFAIFHLKASREFIAKPNSYTIQYFDAMYVCADELKALMIPSKEIAKLGLLIETYIWNKDTIPSIKIFNSTRKTIYIPTGICIARIIFTCGHFCLSLMPERAINRLQVLDANSSFLFHYAASNNA.

Belongs to the dUTPase family. Mg(2+) serves as cofactor.

It catalyses the reaction dUTP + H2O = dUMP + diphosphate + H(+). In terms of biological role, involved in nucleotide metabolism: produces dUMP, the immediate precursor of thymidine nucleotides and decreases the intracellular concentration of dUTP to avoid uracil incorporation into viral DNA. The sequence is that of Deoxyuridine 5'-triphosphate nucleotidohydrolase from Homo sapiens (Human).